We begin with the raw amino-acid sequence, 216 residues long: Peptide methionine sulfoxide reductase MsrA (216 aa).

Residue C54 is part of the active site.

This sequence belongs to the MsrA Met sulfoxide reductase family.

It carries out the reaction L-methionyl-[protein] + [thioredoxin]-disulfide + H2O = L-methionyl-(S)-S-oxide-[protein] + [thioredoxin]-dithiol. It catalyses the reaction [thioredoxin]-disulfide + L-methionine + H2O = L-methionine (S)-S-oxide + [thioredoxin]-dithiol. Has an important function as a repair enzyme for proteins that have been inactivated by oxidation. Catalyzes the reversible oxidation-reduction of methionine sulfoxide in proteins to methionine. This chain is Peptide methionine sulfoxide reductase MsrA, found in Xylella fastidiosa (strain M12).